The following is a 227-amino-acid chain: MLISIDQVLSKTEVRDLRAQLDAAAWEDGAATAGTLAKSVKRNQQINDGSELCQRLGQHILRRLSSTPLFISAALPRTIYPPKFNRYADGGTYGAHVDSALMFLPGSHQQMRTDLSATLFLAEPEEYDGGELEVEGPFGVQAVKLAAGDMVLYPSSSLHRVTPVTRGARVASFFWIESLVQDEGERTLLFDLDQSIQQLTPLVAPDDPRLVQLTGVYHNLLRRWARP.

The 101-residue stretch at 78–178 (TIYPPKFNRY…RVASFFWIES (101 aa)) folds into the Fe2OG dioxygenase domain. 3 residues coordinate Fe cation: H96, D98, and H159. R169 is a 2-oxoglutarate binding site.

Requires Fe(2+) as cofactor. L-ascorbate is required as a cofactor.

The chain is PKHD-type hydroxylase Dtpsy_0528 from Acidovorax ebreus (strain TPSY) (Diaphorobacter sp. (strain TPSY)).